The following is a 274-amino-acid chain: Ethanolamine ammonia-lyase small subunit (274 aa).

3 residues coordinate adenosylcob(III)alamin: V161, E182, and C211.

This sequence belongs to the EutC family. In terms of assembly, the basic unit is a heterodimer which dimerizes to form tetramers. The heterotetramers trimerize; 6 large subunits form a core ring with 6 small subunits projecting outwards. Adenosylcob(III)alamin is required as a cofactor.

The protein localises to the bacterial microcompartment. The catalysed reaction is ethanolamine = acetaldehyde + NH4(+). The protein operates within amine and polyamine degradation; ethanolamine degradation. Catalyzes the deamination of various vicinal amino-alcohols to oxo compounds. Allows this organism to utilize ethanolamine as the sole source of nitrogen and carbon in the presence of external vitamin B12. The sequence is that of Ethanolamine ammonia-lyase small subunit from Pseudomonas fluorescens (strain Pf0-1).